A 386-amino-acid polypeptide reads, in one-letter code: Trichocyst matrix protein T2-B (386 aa).

An N-terminal signal peptide occupies residues 1–19 (MKTIILALALIALVSSTQS). Positions 20–48 (DVIDTIKKIDQSPFGRTLFDTIWLELQTG) are excised as a propeptide. Positions 51–154 (LDRLVSTLTD…AEEHEDFEEK (104 aa)) form a coiled coil. Residues 184-238 (KGKAAKQPHKFTKDVANLIQKHFTTSAKKTAKFQHRKGYSKLFKAFATIASKVEQ) constitute a propeptide that is removed on maturation. A coiled-coil region spans residues 294–325 (ALANAISDLAALNDIIAQVEASLDTTVQRIEN).

Belongs to the TMP family.

It is found in the trichocyst. In terms of biological role, structural protein that crystallize inside the trichocyst matrix. The sequence is that of Trichocyst matrix protein T2-B (T2B) from Paramecium tetraurelia.